Here is a 512-residue protein sequence, read N- to C-terminus: Allene oxide synthase 1, chloroplastic (512 aa).

The N-terminal 25 residues, methionine 1–arginine 25, are a transit peptide targeting the chloroplast. Positions glutamine 23–arginine 43 are disordered. Residues lysine 127, histidine 158, and lysine 162 each coordinate heme b. Asparagine 315 contacts (13S)-hydroperoxy-(9Z,11E,15Z)-octadecatrienoate. Heme b contacts are provided by lysine 463 and cysteine 465.

This sequence belongs to the cytochrome P450 family. It depends on heme b as a cofactor. In terms of tissue distribution, expressed in coleoptiles, and at lower level in leaves of dark-grown seedlings.

The protein resides in the plastid. It is found in the chloroplast membrane. It catalyses the reaction (13S)-hydroperoxy-(9Z,11E,15Z)-octadecatrienoate = (9Z,13S,15Z)-12,13-epoxyoctadeca-9,11,15-trienoate + H2O. Its pathway is lipid metabolism; oxylipin biosynthesis. Involved in the biosynthesis of jasmonic acid, a growth regulator that is implicated also as a signaling molecule in plant defense. Converts 13-hydroperoxylinolenic acid to 12,13-epoxylinolenic acid. The protein is Allene oxide synthase 1, chloroplastic (CYP74A1) of Oryza sativa subsp. japonica (Rice).